An 89-amino-acid chain; its full sequence is UPF0335 protein Nwi_0989 (89 aa).

Belongs to the UPF0335 family.

This is UPF0335 protein Nwi_0989 from Nitrobacter winogradskyi (strain ATCC 25391 / DSM 10237 / CIP 104748 / NCIMB 11846 / Nb-255).